Here is a 465-residue protein sequence, read N- to C-terminus: Poly(A) polymerase I (465 aa).

Residues aspartate 80, aspartate 82, and aspartate 162 contribute to the active site. The tract at residues 429–465 (SAPPDQKGMLNELDEEPSPRRRTRRPRKRAPRREGTA) is disordered. Residues 448–459 (RRRTRRPRKRAP) show a composition bias toward basic residues.

The protein belongs to the tRNA nucleotidyltransferase/poly(A) polymerase family.

It carries out the reaction RNA(n) + ATP = RNA(n)-3'-adenine ribonucleotide + diphosphate. Adds poly(A) tail to the 3' end of many RNAs, which usually targets these RNAs for decay. Plays a significant role in the global control of gene expression, through influencing the rate of transcript degradation, and in the general RNA quality control. The sequence is that of Poly(A) polymerase I from Escherichia coli O157:H7.